The chain runs to 167 residues: NADH-ubiquinone oxidoreductase chain 4 (167 aa).

3 consecutive transmembrane segments (helical) span residues 2 to 22 (FIGA…LFCL), 44 to 64 (LLPL…ALPP), and 86 to 106 (IILV…MLIM).

The protein belongs to the complex I subunit 4 family.

Its subcellular location is the mitochondrion membrane. It carries out the reaction a ubiquinone + NADH + 5 H(+)(in) = a ubiquinol + NAD(+) + 4 H(+)(out). In terms of biological role, core subunit of the mitochondrial membrane respiratory chain NADH dehydrogenase (Complex I) that is believed to belong to the minimal assembly required for catalysis. Complex I functions in the transfer of electrons from NADH to the respiratory chain. The immediate electron acceptor for the enzyme is believed to be ubiquinone. In Carlito syrichta (Philippine tarsier), this protein is NADH-ubiquinone oxidoreductase chain 4 (MT-ND4).